A 444-amino-acid chain; its full sequence is tRNA-2-methylthio-N(6)-dimethylallyladenosine synthase (444 aa).

The MTTase N-terminal domain occupies 2–119 (KKVYIKTFGC…LPDLIESRKQ (118 aa)). 6 residues coordinate [4Fe-4S] cluster: C11, C48, C82, C156, C160, and C163. Positions 142–374 (KVDGGAAFVS…NEVIEAKGYA (233 aa)) constitute a Radical SAM core domain. Residues 377–440 (QSMVGTVQRV…PHSLAGEALT (64 aa)) enclose the TRAM domain.

Belongs to the methylthiotransferase family. MiaB subfamily. In terms of assembly, monomer. [4Fe-4S] cluster is required as a cofactor.

Its subcellular location is the cytoplasm. It catalyses the reaction N(6)-dimethylallyladenosine(37) in tRNA + (sulfur carrier)-SH + AH2 + 2 S-adenosyl-L-methionine = 2-methylsulfanyl-N(6)-dimethylallyladenosine(37) in tRNA + (sulfur carrier)-H + 5'-deoxyadenosine + L-methionine + A + S-adenosyl-L-homocysteine + 2 H(+). Its function is as follows. Catalyzes the methylthiolation of N6-(dimethylallyl)adenosine (i(6)A), leading to the formation of 2-methylthio-N6-(dimethylallyl)adenosine (ms(2)i(6)A) at position 37 in tRNAs that read codons beginning with uridine. This Chromobacterium violaceum (strain ATCC 12472 / DSM 30191 / JCM 1249 / CCUG 213 / NBRC 12614 / NCIMB 9131 / NCTC 9757 / MK) protein is tRNA-2-methylthio-N(6)-dimethylallyladenosine synthase.